Here is a 325-residue protein sequence, read N- to C-terminus: Ribosomal RNA small subunit methyltransferase H (325 aa).

Residues glycine 32–histidine 34, aspartate 52, phenylalanine 79, aspartate 100, and glutamine 107 each bind S-adenosyl-L-methionine.

It belongs to the methyltransferase superfamily. RsmH family.

The protein localises to the cytoplasm. The catalysed reaction is cytidine(1402) in 16S rRNA + S-adenosyl-L-methionine = N(4)-methylcytidine(1402) in 16S rRNA + S-adenosyl-L-homocysteine + H(+). Its function is as follows. Specifically methylates the N4 position of cytidine in position 1402 (C1402) of 16S rRNA. The polypeptide is Ribosomal RNA small subunit methyltransferase H (Oceanobacillus iheyensis (strain DSM 14371 / CIP 107618 / JCM 11309 / KCTC 3954 / HTE831)).